The following is a 234-amino-acid chain: Endonuclease NucS (234 aa).

It belongs to the NucS endonuclease family.

The protein resides in the cytoplasm. Its function is as follows. Cleaves both 3' and 5' ssDNA extremities of branched DNA structures. The sequence is that of Endonuclease NucS from Bifidobacterium animalis subsp. lactis (strain AD011).